The primary structure comprises 567 residues: Ribulokinase (567 aa).

It belongs to the ribulokinase family.

The catalysed reaction is D-ribulose + ATP = D-ribulose 5-phosphate + ADP + H(+). It catalyses the reaction L-ribulose + ATP = L-ribulose 5-phosphate + ADP + H(+). The protein operates within carbohydrate degradation; L-arabinose degradation via L-ribulose; D-xylulose 5-phosphate from L-arabinose (bacterial route): step 2/3. The protein is Ribulokinase of Vibrio parahaemolyticus serotype O3:K6 (strain RIMD 2210633).